The primary structure comprises 172 residues: MPEELTPTPETAVVEAGPVSRWLSENGFENTALERDHLGVEIVQVDREVLLPIAAALFAYGFNYLQCQGGYDLGPGQDLVSFYHLTKVSDDASQPQEVRVKVFLPRHDPKVPPVFWIWKGADWQERETFDMYGIQFEGHPNLKRILMPEDWVGWPLRKDYISPDFYELQDAY.

It belongs to the complex I 30 kDa subunit family. As to quaternary structure, NDH-1 can be composed of about 15 different subunits; different subcomplexes with different compositions have been identified which probably have different functions.

The protein localises to the cellular thylakoid membrane. The enzyme catalyses a plastoquinone + NADH + (n+1) H(+)(in) = a plastoquinol + NAD(+) + n H(+)(out). It carries out the reaction a plastoquinone + NADPH + (n+1) H(+)(in) = a plastoquinol + NADP(+) + n H(+)(out). Its function is as follows. NDH-1 shuttles electrons from an unknown electron donor, via FMN and iron-sulfur (Fe-S) centers, to quinones in the respiratory and/or the photosynthetic chain. The immediate electron acceptor for the enzyme in this species is believed to be plastoquinone. Couples the redox reaction to proton translocation, and thus conserves the redox energy in a proton gradient. Cyanobacterial NDH-1 also plays a role in inorganic carbon-concentration. The protein is NAD(P)H-quinone oxidoreductase subunit J of Synechococcus sp. (strain ATCC 27144 / PCC 6301 / SAUG 1402/1) (Anacystis nidulans).